The following is a 212-amino-acid chain: General odorant-binding protein 68 (212 aa).

The signal sequence occupies residues M1–A28. Cystine bridges form between C64–C85, C80–C152, and C130–C162.

This sequence belongs to the PBP/GOBP family.

It is found in the secreted. Present in the aqueous fluid surrounding olfactory sensory dendrites and are thought to aid in the capture and transport of hydrophobic odorants into and through this fluid. The protein is General odorant-binding protein 68 (Obp68) of Anopheles gambiae (African malaria mosquito).